The chain runs to 961 residues: Probable inorganic carbon transporter subunit DabA (961 aa).

Positions 406, 408, 653, and 668 each coordinate Zn(2+).

It belongs to the inorganic carbon transporter (TC 9.A.2) DabA family. In terms of assembly, forms a complex with DabB. It depends on Zn(2+) as a cofactor.

The protein resides in the cell inner membrane. Functionally, part of an energy-coupled inorganic carbon pump. The polypeptide is Probable inorganic carbon transporter subunit DabA (Hydrogenobaculum sp. (strain Y04AAS1)).